A 484-amino-acid polypeptide reads, in one-letter code: Sperm motility kinase 1 (484 aa).

The 249-residue stretch at 8 to 256 folds into the Protein kinase domain; that stretch reads YEMLETIGQG…VAEVMVHPWI (249 aa). Residues 14–22 and Lys-37 each bind ATP; that span reads IGQGGCAKV. The Proton acceptor role is filled by Asp-127. The 41-residue stretch at 274–314 folds into the UBA domain; that stretch reads KPDPAIVKPMGHIGFQAQDIEDSLRQRKFNETMASYCLLKK. Polar residues predominate over residues 423–434; sequence IDESTEGHTSAS. A disordered region spans residues 423-447; sequence IDESTEGHTSASAEDKPVHSRGWPR.

It belongs to the protein kinase superfamily. Tyr protein kinase family. Smok subfamily. As to expression, testis-specific. Expressed in the testis from 22 days postpartum (22 dpp).

The enzyme catalyses L-seryl-[protein] + ATP = O-phospho-L-seryl-[protein] + ADP + H(+). It carries out the reaction L-threonyl-[protein] + ATP = O-phospho-L-threonyl-[protein] + ADP + H(+). Its function is as follows. May play a role in sperm motility, especially in the regulation of flagellar function. In Mus musculus (Mouse), this protein is Sperm motility kinase 1 (Smok1).